Reading from the N-terminus, the 414-residue chain is Nuclear localization sequence-binding protein (414 aa).

Disordered stretches follow at residues 1–172 (MAKT…TIFV), 244–264 (STSK…TPSE), and 336–414 (RPVR…KTFD). Positions 10–26 (NKKEVKASKQAKEEKAK) are enriched in basic and acidic residues. Composition is skewed to low complexity over residues 27–44 (AVSS…SSSE) and 54–73 (ESSS…SSSD). A compositionally biased stretch (basic and acidic residues) spans 78–87 (AETKKEESKD). 9 positions are modified to phosphoserine: S93, S95, S96, S97, S116, S127, S129, S131, and S143. A compositionally biased stretch (acidic residues) spans 96–105 (SSDEEEEEEK). Residues 106-117 (EETKKEESKESS) are compositionally biased toward basic and acidic residues. Residues 118–128 (SSDSSSSSSSD) are compositionally biased toward low complexity. The segment covering 134 to 144 (EESNDKKRKSE) has biased composition (basic and acidic residues). 2 RRM domains span residues 168-246 (ATIF…MSTS) and 267-345 (DTLF…FSSP). A compositionally biased stretch (gly residues) spans 351–386 (GGRGGSRGFGGRGGGRGGNRGFGGRGGARGGRGGFR). The residue at position 353 (R353) is an Omega-N-methylarginine. Positions 353-384 (RGGSRGFGGRGGGRGGNRGFGGRGGARGGRGG) are RGG-box. 3 positions are modified to asymmetric dimethylarginine; by HMT1; alternate: R357, R362, and R366. Omega-N-methylarginine; by HMT1; alternate occurs at positions 357, 362, and 366. Positions 366 to 384 (RGGNRGFGGRGGARGGRGG) are RNA-binding RGG-box. R370 carries the post-translational modification Omega-N-methylarginine. Asymmetric dimethylarginine; by HMT1; alternate occurs at positions 375, 379, and 382. Residues R375, R379, and R382 each carry the omega-N-methylarginine; by HMT1; alternate modification. R386 is modified (omega-N-methylarginine).

This sequence belongs to the RRM GAR family. Post-translationally, methylated by HMT1, forming asymmetric dimethylarginines (DMA) within a domain referred to as an RGG box, made up of repeated Gly-Gly dipeptides interspersed with Arg and aromatic residues. Pyrophosphorylated by 5-diphosphoinositol pentakisphosphate (5-IP7). Serine pyrophosphorylation is achieved by Mg(2+)-dependent, but enzyme independent transfer of a beta-phosphate from a inositol pyrophosphate to a pre-phosphorylated serine residue.

The protein resides in the nucleus. Its subcellular location is the nucleolus. Its function is as follows. Involved in pre-rRNA processing. Specifically binds nuclear localization sequences. Candidate for a receptor at the nucleus that may be involved in both RNA and protein transport. Binds telomeric sequences of the type (TG[1-3])n in vitro. The sequence is that of Nuclear localization sequence-binding protein from Saccharomyces cerevisiae (strain ATCC 204508 / S288c) (Baker's yeast).